Here is a 296-residue protein sequence, read N- to C-terminus: Acetylglutamate kinase (296 aa).

Residues 69–70 (GG), arginine 91, and asparagine 193 each bind substrate.

This sequence belongs to the acetylglutamate kinase family. ArgB subfamily.

Its subcellular location is the cytoplasm. The catalysed reaction is N-acetyl-L-glutamate + ATP = N-acetyl-L-glutamyl 5-phosphate + ADP. The protein operates within amino-acid biosynthesis; L-arginine biosynthesis; N(2)-acetyl-L-ornithine from L-glutamate: step 2/4. Functionally, catalyzes the ATP-dependent phosphorylation of N-acetyl-L-glutamate. The polypeptide is Acetylglutamate kinase (Delftia acidovorans (strain DSM 14801 / SPH-1)).